Consider the following 97-residue polypeptide: Co-chaperonin GroES (97 aa).

The protein belongs to the GroES chaperonin family. In terms of assembly, heptamer of 7 subunits arranged in a ring. Interacts with the chaperonin GroEL.

It is found in the cytoplasm. Functionally, together with the chaperonin GroEL, plays an essential role in assisting protein folding. The GroEL-GroES system forms a nano-cage that allows encapsulation of the non-native substrate proteins and provides a physical environment optimized to promote and accelerate protein folding. GroES binds to the apical surface of the GroEL ring, thereby capping the opening of the GroEL channel. The protein is Co-chaperonin GroES of Pseudomonas putida (strain ATCC 700007 / DSM 6899 / JCM 31910 / BCRC 17059 / LMG 24140 / F1).